We begin with the raw amino-acid sequence, 399 residues long: Serpin-Z4 (399 aa).

The interval glycine 36–alanine 56 is signal for targeting protein Z4 into the ER lumen. An RCL region spans residues glycine 343–aspartate 367.

The protein belongs to the serpin family. As to expression, highly expressed in embryo and endosperm. Is accumulated and stored in the endosperm, where it exists in a free and a bound form. Expressed in roots, coleoptiles, shoots and leaves.

Its function is as follows. A major component of the endosperm albumin, this protein acts as a storage protein during grain filling, contributing a substantial part of the grain's lysine. May have an inhibitory function during filling or germination. Inhibits cathepsin G in vitro. The polypeptide is Serpin-Z4 (PAZ1) (Hordeum vulgare (Barley)).